A 232-amino-acid polypeptide reads, in one-letter code: Small ribosomal subunit protein uS3 (232 aa).

Residues 39–107 (VRQYLTKALK…PAQINIAEVR (69 aa)) form the KH type-2 domain.

The protein belongs to the universal ribosomal protein uS3 family. Part of the 30S ribosomal subunit. Forms a tight complex with proteins S10 and S14.

Functionally, binds the lower part of the 30S subunit head. Binds mRNA in the 70S ribosome, positioning it for translation. The sequence is that of Small ribosomal subunit protein uS3 from Pseudoalteromonas atlantica (strain T6c / ATCC BAA-1087).